A 201-amino-acid chain; its full sequence is Recombination protein RecR (201 aa).

The segment at Cys57–Cys72 adopts a C4-type zinc-finger fold. The region spanning Thr81–Pro176 is the Toprim domain.

This sequence belongs to the RecR family.

May play a role in DNA repair. It seems to be involved in an RecBC-independent recombinational process of DNA repair. It may act with RecF and RecO. The sequence is that of Recombination protein RecR from Colwellia psychrerythraea (strain 34H / ATCC BAA-681) (Vibrio psychroerythus).